The following is a 161-amino-acid chain: Short form salivary protein D7S (161 aa).

The N-terminal stretch at 1–18 (MKFPSILLAILLFKPITA) is a signal peptide. Intrachain disulfides connect C33/C67, C47/C155, and C109/C125.

Belongs to the PBP/GOBP family.

The protein localises to the secreted. Its function is as follows. In contrast to the related D7 salivary proteins, does not bind serotonin. The chain is Short form salivary protein D7S from Culex quinquefasciatus (Southern house mosquito).